We begin with the raw amino-acid sequence, 315 residues long: Lipoyl synthase (315 aa).

[4Fe-4S] cluster is bound by residues Cys62, Cys67, Cys73, Cys88, Cys92, Cys95, and Ser302. Residues Phe74–Lys291 form the Radical SAM core domain.

Belongs to the radical SAM superfamily. Lipoyl synthase family. The cofactor is [4Fe-4S] cluster.

It localises to the cytoplasm. The enzyme catalyses [[Fe-S] cluster scaffold protein carrying a second [4Fe-4S](2+) cluster] + N(6)-octanoyl-L-lysyl-[protein] + 2 oxidized [2Fe-2S]-[ferredoxin] + 2 S-adenosyl-L-methionine + 4 H(+) = [[Fe-S] cluster scaffold protein] + N(6)-[(R)-dihydrolipoyl]-L-lysyl-[protein] + 4 Fe(3+) + 2 hydrogen sulfide + 2 5'-deoxyadenosine + 2 L-methionine + 2 reduced [2Fe-2S]-[ferredoxin]. It functions in the pathway protein modification; protein lipoylation via endogenous pathway; protein N(6)-(lipoyl)lysine from octanoyl-[acyl-carrier-protein]: step 2/2. In terms of biological role, catalyzes the radical-mediated insertion of two sulfur atoms into the C-6 and C-8 positions of the octanoyl moiety bound to the lipoyl domains of lipoate-dependent enzymes, thereby converting the octanoylated domains into lipoylated derivatives. This is Lipoyl synthase from Aromatoleum aromaticum (strain DSM 19018 / LMG 30748 / EbN1) (Azoarcus sp. (strain EbN1)).